A 768-amino-acid polypeptide reads, in one-letter code: MDFETNEDINGVRFTWNVFPSTRSDANSNVVPVGCLYTPLKEYDELNVAPYNPVVCSGPHCKSILNPYCVIDPRNSSWSCPICNSRNHLPPQYTNLSQENMPLELQSTTIEYITNKPVTVPPIFFFVVDLTSETENLDSLKESIITSLSLLPPNALIGLITYGNVVQLHDLSSETIDRCNVFRGDREYQLEALTEMLTGQKPTGPGGAASHLPNAMNKVTPFSLNRFFLPLEQVEFKLNQLLENLSPDQWSVPAGHRPLRATGSALNIASLLLQGCYKNIPARIILFASGPGTVAPGLIVNSELKDPLRSHHDIDSDHAQHYKKACKFYNQIAQRVAANGHTVDIFAGCYDQIGMSEMKQLTDSTGGVLLLTDAFSTAIFKQSYLRLFAKDEEGYLKMAFNGNMAVKTSKDLKVQGLIGHASAVKKTDANNISESEIGIGATSTWKMASLSPYHSYAIFFEIANTAANSNPMMSAPGSADRPHLAYTQFITTYQHSSGTNRIRVTTVANQLLPFGTPAIAASFDQEAAAVLMARIAVHKAETDDGADVIRWLDRTLIKLCQKYADYNKDDPQSFRLAPNFSLYPQFTYYLRRSQFLSVFNNSPDETAFYRHIFTREDTTNSLIMIQPTLTSFSMEDDPQPVLLDSISVKPNTILLLDTFFFILIYHGEQIAQWRKAGYQDDPQYADFKALLEEPKLEAAELLVDRFPLPRFIDTEAGGSQARFLLSKLNPSDNYQDMARGGSTIVLTDDVSLQNFMTHLQQVAVSGQA.

Residue Met-1 is modified to N-acetylmethionine. Zn(2+) is bound by residues Cys-56, Cys-61, Cys-80, and Cys-83.

This sequence belongs to the SEC23/SEC24 family. SEC23 subfamily. The COPII coat is composed of at least 7 proteins: the SEC23/24 complex, the SEC13/31 complex, SFB2, SFB3 and the protein SAR1. Forms two other heterodimeric complexes with SFB3 and PDR17. Interacts with BET1, BET3, BOS1, EMP24, GRH1, SEC16, SEC22 and SYS1. Post-translationally, ubiquitinated. Ubiquitination is required for the formation of the SEC23/24 complex. Deubiquitinated by the UBP3/BRE5 complex.

It localises to the cytoplasmic vesicle. Its subcellular location is the COPII-coated vesicle membrane. The protein resides in the cytoplasm. It is found in the endoplasmic reticulum membrane. The protein localises to the golgi apparatus membrane. In terms of biological role, component of the coat protein complex II (COPII) which promotes the formation of transport vesicles from the endoplasmic reticulum (ER). The coat has two main functions, the physical deformation of the endoplasmic reticulum membrane into vesicles and the selection of cargo molecules. SEC23 interacts with BET3 in order to target TRAPPI complex to COPII involved in internalization of plasma membrane proteins like the maltose transporter. The protein is Protein transport protein SEC23 (SEC23) of Saccharomyces cerevisiae (strain ATCC 204508 / S288c) (Baker's yeast).